The primary structure comprises 147 residues: Leghemoglobin-1 (147 aa).

The Globin domain maps to 2–147 (SFTDKQEALV…LATAIKKAMS (146 aa)). Residues Tyr25 and Tyr30 each carry the nitrated tyrosine modification. A heme b-binding site is contributed by Ser45. Ser45 is subject to Phosphoserine. His62 serves as a coordination point for O2. The heme b site is built by Lys65, His94, and Lys97. The residue at position 135 (Tyr135) is a Nitrated tyrosine.

It belongs to the plant globin family. Monomer. Nitrated in effective nodules and particularly in hypoxic conditions; this mechanism may play a protective role in the symbiosis by buffering toxic peroxynitrite NO(2)(-). Nitration level decrease during nodule senescence. Post-translationally, phosphorylation at Ser-45 disrupts the molecular environment of its porphyrin ring oxygen binding pocket, thus leading to a reduced oxygen consumption and to the delivery of oxygen O(2) to symbiosomes. In terms of tissue distribution, root nodules.

It is found in the cytoplasm. Its subcellular location is the cytosol. It localises to the nucleus. In terms of biological role, leghemoglobin that reversibly binds oxygen O(2) through a pentacoordinated heme iron. In root nodules, facilitates the diffusion of oxygen to the bacteroids while preventing the bacterial nitrogenase from being inactivated by buffering dioxygen, nitric oxide and carbon monoxide, and promoting the formation of reactive oxygen species (ROS, e.g. H(2)O(2)). This role is essential for symbiotic nitrogen fixation (SNF). This is Leghemoglobin-1 from Medicago sativa (Alfalfa).